A 112-amino-acid chain; its full sequence is Tyrosine-protein phosphatase 8 (112 aa).

A Tyrosine-protein phosphatase domain is found at 1-112 (ENSTAIVMIT…ANSEYGPVVV (112 aa)).

It belongs to the protein-tyrosine phosphatase family.

The enzyme catalyses O-phospho-L-tyrosyl-[protein] + H2O = L-tyrosyl-[protein] + phosphate. This chain is Tyrosine-protein phosphatase 8 (STY-8), found in Styela plicata (Wrinkled sea squirt).